The chain runs to 314 residues: Methionyl-tRNA formyltransferase (314 aa).

109 to 112 (SVLP) contacts (6S)-5,6,7,8-tetrahydrofolate.

Belongs to the Fmt family.

It carries out the reaction L-methionyl-tRNA(fMet) + (6R)-10-formyltetrahydrofolate = N-formyl-L-methionyl-tRNA(fMet) + (6S)-5,6,7,8-tetrahydrofolate + H(+). Its function is as follows. Attaches a formyl group to the free amino group of methionyl-tRNA(fMet). The formyl group appears to play a dual role in the initiator identity of N-formylmethionyl-tRNA by promoting its recognition by IF2 and preventing the misappropriation of this tRNA by the elongation apparatus. This chain is Methionyl-tRNA formyltransferase, found in Dictyoglomus turgidum (strain DSM 6724 / Z-1310).